The primary structure comprises 188 residues: Elongation factor P (188 aa).

K34 is modified (N6-(3,6-diaminohexanoyl)-5-hydroxylysine).

Belongs to the elongation factor P family. May be beta-lysylated on the epsilon-amino group of Lys-34 by the combined action of EpmA and EpmB, and then hydroxylated on the C5 position of the same residue by EpmC (if this protein is present). Lysylation is critical for the stimulatory effect of EF-P on peptide-bond formation. The lysylation moiety may extend toward the peptidyltransferase center and stabilize the terminal 3-CCA end of the tRNA. Hydroxylation of the C5 position on Lys-34 may allow additional potential stabilizing hydrogen-bond interactions with the P-tRNA.

Its subcellular location is the cytoplasm. The protein operates within protein biosynthesis; polypeptide chain elongation. In terms of biological role, involved in peptide bond synthesis. Alleviates ribosome stalling that occurs when 3 or more consecutive Pro residues or the sequence PPG is present in a protein, possibly by augmenting the peptidyl transferase activity of the ribosome. Modification of Lys-34 is required for alleviation. In Actinobacillus succinogenes (strain ATCC 55618 / DSM 22257 / CCUG 43843 / 130Z), this protein is Elongation factor P.